Consider the following 532-residue polypeptide: Apolipoprotein N-acyltransferase (532 aa).

The next 6 helical transmembrane spans lie at 37–57 (IFVA…GAIA), 75–95 (WWFG…ALLV), 106–126 (LAVL…AMIA), 128–148 (LLWS…ALAE), 179–199 (VIGL…PALL), and 207–227 (TGIG…AWTL). A CN hydrolase domain is found at 245 to 494 (VQPSIAQAMK…VGVVDSYLPS (250 aa)). E289 functions as the Proton acceptor in the catalytic mechanism. K353 is an active-site residue. C406 functions as the Nucleophile in the catalytic mechanism. A helical membrane pass occupies residues 505–525 (GWIQTVLILLTLLAASVGLIL).

Belongs to the CN hydrolase family. Apolipoprotein N-acyltransferase subfamily.

It localises to the cell inner membrane. It catalyses the reaction N-terminal S-1,2-diacyl-sn-glyceryl-L-cysteinyl-[lipoprotein] + a glycerophospholipid = N-acyl-S-1,2-diacyl-sn-glyceryl-L-cysteinyl-[lipoprotein] + a 2-acyl-sn-glycero-3-phospholipid + H(+). It functions in the pathway protein modification; lipoprotein biosynthesis (N-acyl transfer). Its function is as follows. Catalyzes the phospholipid dependent N-acylation of the N-terminal cysteine of apolipoprotein, the last step in lipoprotein maturation. The polypeptide is Apolipoprotein N-acyltransferase (Brucella melitensis biotype 1 (strain ATCC 23456 / CCUG 17765 / NCTC 10094 / 16M)).